Reading from the N-terminus, the 449-residue chain is Phosphoglucosamine mutase (449 aa).

The active-site Phosphoserine intermediate is the serine 101. Mg(2+) contacts are provided by serine 101, aspartate 243, aspartate 245, and aspartate 247. At serine 101 the chain carries Phosphoserine.

It belongs to the phosphohexose mutase family. Mg(2+) is required as a cofactor. Post-translationally, activated by phosphorylation.

The catalysed reaction is alpha-D-glucosamine 1-phosphate = D-glucosamine 6-phosphate. In terms of biological role, catalyzes the conversion of glucosamine-6-phosphate to glucosamine-1-phosphate. The sequence is that of Phosphoglucosamine mutase from Syntrophus aciditrophicus (strain SB).